Here is a 63-residue protein sequence, read N- to C-terminus: ComG operon repressor (63 aa).

Its function is as follows. Negatively regulates the transcription of the comG operon. This chain is ComG operon repressor (comZ), found in Bacillus subtilis (strain 168).